Consider the following 390-residue polypeptide: GTPase Obg (390 aa).

In terms of domain architecture, Obg spans 1–159 (MKFVDEAVIR…RHLRLELLLL (159 aa)). The disordered stretch occupies residues 22–42 (SFRTEKYVPRGGPDGGDGGDG). The span at 33–42 (GPDGGDGGDG) shows a compositional bias: gly residues. In terms of domain architecture, OBG-type G spans 160-333 (ADVGMLGLPN…LTYNLMTTIE (174 aa)). Residues 166–173 (GLPNAGKS), 191–195 (FTTLI), 213–216 (DIPG), 283–286 (NKVD), and 314–316 (SAL) each bind GTP. Mg(2+)-binding residues include Ser173 and Thr193.

The protein belongs to the TRAFAC class OBG-HflX-like GTPase superfamily. OBG GTPase family. Monomer. The cofactor is Mg(2+).

It localises to the cytoplasm. Functionally, an essential GTPase which binds GTP, GDP and possibly (p)ppGpp with moderate affinity, with high nucleotide exchange rates and a fairly low GTP hydrolysis rate. Plays a role in control of the cell cycle, stress response, ribosome biogenesis and in those bacteria that undergo differentiation, in morphogenesis control. This chain is GTPase Obg, found in Photobacterium profundum (strain SS9).